The sequence spans 1341 residues: Aldehyde oxidase 4 (1341 aa).

The 2Fe-2S ferredoxin-type domain maps to 8–95 (DELIFFVNGK…GAAVTTVEGV (88 aa)). [2Fe-2S] cluster contacts are provided by Cys-47, Cys-52, Cys-55, and Cys-77. Position 116 (Gln-116) interacts with Mo-molybdopterin. The [2Fe-2S] cluster site is built by Cys-117, Cys-120, Cys-152, and Cys-154. Cys-154 contributes to the Mo-molybdopterin binding site. Residues 239 to 424 (FQGERTTWLA…LSVFIPYSSQ (186 aa)) enclose the FAD-binding PCMH-type domain. FAD-binding positions include 267–274 (LIMGNTTV), Ala-348, Thr-357, His-361, Asp-370, and Val-414. Mo-molybdopterin-binding positions include Ala-805, 805–806 (AF), Leu-1046, 1087–1090 (GSMG), Gln-1202, and Leu-1266. The active-site Proton acceptor; for azaheterocycle hydroxylase activity is the Glu-1268.

It belongs to the xanthine dehydrogenase family. Homodimer. [2Fe-2S] cluster is required as a cofactor. FAD serves as cofactor. It depends on Mo-molybdopterin as a cofactor. Detected in liver, testis, kidney, brain, Harderian gland and olfactory mucosa.

Its subcellular location is the cytoplasm. The enzyme catalyses an aldehyde + O2 + H2O = a carboxylate + H2O2 + H(+). The catalysed reaction is retinal + O2 + H2O = retinoate + H2O2 + H(+). Functionally, aldehyde oxidase able to catalyze the oxidation of retinaldehyde into retinoate. Acts as a negative modulator of the epidermal trophism. May be able to oxidize a wide variety of aldehydes into their corresponding carboxylates and to hydroxylate azaheterocycles. This Cavia porcellus (Guinea pig) protein is Aldehyde oxidase 4 (AOX4).